The chain runs to 380 residues: 12-oxophytodienoate reductase 1 (380 aa).

FMN is bound by residues 35-37, Ala68, and Gln110; that span reads PLT. Substrate is bound at residue 182 to 185; that stretch reads HGAH. Catalysis depends on Tyr187, which acts as the Proton donor. Residue Arg234 coordinates FMN. Arg275 is a binding site for substrate. FMN is bound by residues Gly305 and 326 to 327; that span reads GR.

Belongs to the NADH:flavin oxidoreductase/NADH oxidase family. It depends on FMN as a cofactor.

The enzyme catalyses (1S,2S)-OPC-8 + NADP(+) = (9S,13S,15Z)-12-oxophyto-10,15-dienoate + NADPH + H(+). The protein operates within lipid metabolism; oxylipin biosynthesis. Functionally, probably involved in the biosynthesis or metabolism of oxylipin signaling molecules. In vitro, reduces cis(-)-12-oxophytodienoic acid (cis(-)-OPDA) and to cis(-)-OPC-8:0. This is 12-oxophytodienoate reductase 1 from Oryza sativa subsp. japonica (Rice).